We begin with the raw amino-acid sequence, 42 residues long: Photosystem II reaction center protein J (42 aa).

Residues 10–30 (IPLWLVATVAGLAVIALLGVF) form a helical membrane-spanning segment.

Belongs to the PsbJ family. In terms of assembly, PSII is composed of 1 copy each of membrane proteins PsbA, PsbB, PsbC, PsbD, PsbE, PsbF, PsbH, PsbI, PsbJ, PsbK, PsbL, PsbM, PsbT, PsbX, PsbY, PsbZ, Psb30/Ycf12, at least 3 peripheral proteins of the oxygen-evolving complex and a large number of cofactors. It forms dimeric complexes.

The protein resides in the plastid. Its subcellular location is the chloroplast thylakoid membrane. Its function is as follows. One of the components of the core complex of photosystem II (PSII). PSII is a light-driven water:plastoquinone oxidoreductase that uses light energy to abstract electrons from H(2)O, generating O(2) and a proton gradient subsequently used for ATP formation. It consists of a core antenna complex that captures photons, and an electron transfer chain that converts photonic excitation into a charge separation. This chain is Photosystem II reaction center protein J, found in Chlorokybus atmophyticus (Soil alga).